A 92-amino-acid polypeptide reads, in one-letter code: Large ribosomal subunit protein eL43 (92 aa).

The Zn(2+) site is built by Cys39, Cys42, Cys57, and Cys60. The C4-type zinc finger occupies 39–60 (CSFCGKTKMKRRAVGIWHCGSC).

It belongs to the eukaryotic ribosomal protein eL43 family. Component of the large ribosomal subunit.

Its subcellular location is the cytoplasm. Its function is as follows. Component of the large ribosomal subunit. The ribosome is a large ribonucleoprotein complex responsible for the synthesis of proteins in the cell. In Mus musculus (Mouse), this protein is Large ribosomal subunit protein eL43 (Rpl37a).